Reading from the N-terminus, the 279-residue chain is Phosphatidylglycerol--prolipoprotein diacylglyceryl transferase (279 aa).

4 helical membrane-spanning segments follow: residues 4–24 (IGPLAIRWYGVLLTLAIFLGY), 44–64 (VVFWAVVFGVVGARLGYVLTS), 76–96 (LYIWHGGLSFHGAILGGGLTF), and 104–124 (GYPLWPYLDAATPGVALGIVA). Arginine 126 serves as a coordination point for a 1,2-diacyl-sn-glycero-3-phospho-(1'-sn-glycerol). Transmembrane regions (helical) follow at residues 182 to 202 (LTQVYGAVVGLILLFLSLYWL), 206 to 226 (PFYGYAFWQFVLWYSVLRSVL), and 245 to 265 (LGIGLFTATQVVSLPLVLLSL).

Belongs to the Lgt family.

Its subcellular location is the cell inner membrane. The enzyme catalyses L-cysteinyl-[prolipoprotein] + a 1,2-diacyl-sn-glycero-3-phospho-(1'-sn-glycerol) = an S-1,2-diacyl-sn-glyceryl-L-cysteinyl-[prolipoprotein] + sn-glycerol 1-phosphate + H(+). It participates in protein modification; lipoprotein biosynthesis (diacylglyceryl transfer). Its function is as follows. Catalyzes the transfer of the diacylglyceryl group from phosphatidylglycerol to the sulfhydryl group of the N-terminal cysteine of a prolipoprotein, the first step in the formation of mature lipoproteins. In Thermus thermophilus (strain ATCC 27634 / DSM 579 / HB8), this protein is Phosphatidylglycerol--prolipoprotein diacylglyceryl transferase.